The following is a 317-amino-acid chain: Olfactory receptor 6P1 (317 aa).

The Extracellular segment spans residues 1-25 (MRNLSGGHVEEFVLVGFPTTPPLQL). The N-linked (GlcNAc...) asparagine glycan is linked to N3. A helical membrane pass occupies residues 26 to 46 (LLFVLFFAIYLLTLLENALIV). Over 47–54 (FTIWLAPS) the chain is Cytoplasmic. A helical transmembrane segment spans residues 55-75 (LHRPMYFFLGHLSFLELWYIN). Residues 76–99 (VTIPRLLAAFLTQDGRVSYVGCMT) are Extracellular-facing. C97 and C189 are disulfide-bonded. Residues 100–120 (QLYFFIALACTECVLLAVMAY) form a helical membrane-spanning segment. The Cytoplasmic segment spans residues 121-139 (DRYLAICGPLLYPSLMPSS). Residues 140–160 (LATRLAAASWGSGFFSSMMKL) traverse the membrane as a helical segment. Topologically, residues 161–197 (LFISQLSYCGPNIINHFFCDISPLLNLTCSDKEQAEL) are extracellular. An N-linked (GlcNAc...) asparagine glycan is attached at N186. A helical transmembrane segment spans residues 198-217 (VDFLLALVMILLPLLAVVSS). Residues 218 to 237 (YTAIIAAILRIPTSRGRHKA) are Cytoplasmic-facing. Residues 238–258 (FSTCAAHLAVVVIYYSSTLFT) form a helical membrane-spanning segment. The Extracellular segment spans residues 259 to 271 (YARPRAMYTFNHN). Residues 272-292 (KIISVLYTIIVPFFNPAIYCL) form a helical membrane-spanning segment. At 293 to 317 (RNKEVKEAFRKTVMGRCHYPRDVQD) the chain is on the cytoplasmic side.

Belongs to the G-protein coupled receptor 1 family.

The protein resides in the cell membrane. Odorant receptor. The protein is Olfactory receptor 6P1 (OR6P1) of Homo sapiens (Human).